The primary structure comprises 139 residues: MMSYDAETGIAKVKCQSQSTCGACSARETCGTESLSELNGKRGEHIFTLETITPLRTDQMVEIGLEEKSMLFSALLMYIVQLFTLLVATLLSSYISENELIRAILIFMLTALSFVMVKRYTRKLGQQTEFQSVLLRVLF.

2 helical membrane-spanning segments follow: residues 71–91 (LFSALLMYIVQLFTLLVATLL) and 97–117 (ENELIRAILIFMLTALSFVMV).

This sequence belongs to the RseC family.

The protein localises to the cell inner membrane. This is an uncharacterized protein from Haemophilus influenzae (strain ATCC 51907 / DSM 11121 / KW20 / Rd).